Reading from the N-terminus, the 150-residue chain is Macrodomain Ter protein (150 aa).

Belongs to the MatP family. Homodimer.

It is found in the cytoplasm. Its function is as follows. Required for spatial organization of the terminus region of the chromosome (Ter macrodomain) during the cell cycle. Prevents early segregation of duplicated Ter macrodomains during cell division. Binds specifically to matS, which is a 13 bp signature motif repeated within the Ter macrodomain. In Escherichia coli O81 (strain ED1a), this protein is Macrodomain Ter protein.